Consider the following 532-residue polypeptide: MAPSGPQPALPILVVLLGALLLGPGNAQTSVFPPEVILPRGGSVKVNCSASCDQPISLGMETPLPKKEILPGGNNWKMYELSNVQEDSQPMCYSNCPDGQSSAKTLLTVYWTPERVELAPLPPWQPVGKNLTLRCQVEGGAPRANLTVMLLRGEKELSRQSAVGEPAEVTTTVPVGRDDHGANFSCRTELDLRPYVLKLFENTSAPHQLQTFDLPATPPQLVSPQVLEVDTQGTVVCSLDGLFPVSEAQVSLALGDQKLNPTITYGNNSLSAKASVKVTAEEEGTQQLLCGVMLGNQTQETRQTVTIYSFPAPNVNLTKPEVSEGTEVIVECEAHPRAKVMLNGVPAQPPGPRAQFLLKATPEDNGRSFSCSATLEVAGQLVHKNQTRELRVLYGPRLDEKDCPGNWTWPENSQQTPMCQAWGNPLPQLKCLKDGTFPLPIGQSVTVTRDLEGTYLCQARSTRGEVTREVTVNVLSPRYEVVIIPVVAAAVILGTAGVATYLYNRQRKIRKYRLQQAQNGTPMKPNTQATPP.

The N-terminal stretch at 1–27 (MAPSGPQPALPILVVLLGALLLGPGNA) is a signal peptide. At 28–480 (QTSVFPPEVI…TVNVLSPRYE (453 aa)) the chain is on the extracellular side. Ig-like C2-type domains lie at 41-103 (GGSV…QSSA) and 128-193 (GKNL…LDLR). N-linked (GlcNAc...) asparagine glycosylation is present at Asn-47. Intrachain disulfides connect Cys-48–Cys-92 and Cys-52–Cys-96. Residues Asn-130 and Asn-145 are each glycosylated (N-linked (GlcNAc...) asparagine). A disulfide bond links Cys-135 and Cys-186. Residues 152–154 (RGE) carry the Cell attachment site; atypical motif. 5 N-linked (GlcNAc...) asparagine glycosylation sites follow: Asn-183, Asn-202, Asn-267, Asn-296, and Asn-316. The region spanning 230–297 (DTQGTVVCSL…LLCGVMLGNQ (68 aa)) is the Ig-like C2-type 3 domain. An intrachain disulfide couples Cys-237 to Cys-290. Residues 325 to 378 (GTEVIVECEAHPRAKVMLNGVPAQPPGPRAQFLLKATPEDNGRSFSCSATLEVA) form the Ig-like C2-type 4 domain. Cys-332 and Cys-371 are joined by a disulfide. N-linked (GlcNAc...) asparagine glycosylation is found at Asn-385 and Asn-406. 3 disulfide bridges follow: Cys-403–Cys-419, Cys-419–Cys-457, and Cys-431–Cys-457. The 53-residue stretch at 412–464 (NSQQTPMCQAWGNPLPQLKCLKDGTFPLPIGQSVTVTRDLEGTYLCQARSTRG) folds into the Ig-like C2-type 5 domain. The helical transmembrane segment at 481 to 503 (VVIIPVVAAAVILGTAGVATYLY) threads the bilayer. The Cytoplasmic segment spans residues 504-532 (NRQRKIRKYRLQQAQNGTPMKPNTQATPP). The disordered stretch occupies residues 513–532 (RLQQAQNGTPMKPNTQATPP). A compositionally biased stretch (polar residues) spans 515-532 (QQAQNGTPMKPNTQATPP). A phosphothreonine mark is found at Thr-521 and Thr-530.

This sequence belongs to the immunoglobulin superfamily. ICAM family. In terms of assembly, homodimer. Interacts with MUC1 and promotes cell aggregation in epithelial cells. Interacts with ARHGEF26/SGEF. Interacts (on T cell side) with CD81, CD247 and CD9 at immunological synapses between antigen-presenting cells and T cells. In terms of processing, monoubiquitinated, which is promoted by MARCH9 and leads to endocytosis.

The protein localises to the membrane. In terms of biological role, ICAM proteins are ligands for the leukocyte adhesion protein LFA-1 (integrin alpha-L/beta-2). During leukocyte trans-endothelial migration, ICAM1 engagement promotes the assembly of endothelial apical cups through ARHGEF26/SGEF and RHOG activation. The chain is Intercellular adhesion molecule 1 (ICAM1) from Macaca mulatta (Rhesus macaque).